We begin with the raw amino-acid sequence, 260 residues long: NH(3)-dependent NAD(+) synthetase (260 aa).

31 to 38 (GLSGGLDS) contributes to the ATP binding site. D37 contributes to the Mg(2+) binding site. R112 lines the deamido-NAD(+) pocket. T132 contacts ATP. E137 is a binding site for Mg(2+). Positions 161 and 183 each coordinate ATP.

The protein belongs to the NAD synthetase family. In terms of assembly, homodimer.

The catalysed reaction is deamido-NAD(+) + NH4(+) + ATP = AMP + diphosphate + NAD(+) + H(+). The protein operates within cofactor biosynthesis; NAD(+) biosynthesis; NAD(+) from deamido-NAD(+) (ammonia route): step 1/1. Its function is as follows. Catalyzes the ATP-dependent amidation of deamido-NAD to form NAD. Uses ammonia as a nitrogen source. This is NH(3)-dependent NAD(+) synthetase from Helicobacter acinonychis (strain Sheeba).